The following is a 266-amino-acid chain: Cytochrome c oxidase subunit 2 (266 aa).

The Mitochondrial intermembrane segment spans residues 1–43; sequence MTITNYINNQFTFLDMAEPWQLGFQDPATPVMEGIINFHHDLM. A helical membrane pass occupies residues 44–64; that stretch reads FFLISIVVFVCWMLFRVITLF. At 65-82 the chain is on the mitochondrial matrix side; sequence DEKKNKIPATVVHGATIE. The helical transmembrane segment at 83–103 threads the bilayer; that stretch reads IIWTSIPALILLTVAVPSFAL. Residues 104–266 lie on the Mitochondrial intermembrane side of the membrane; that stretch reads LYSMDEVIDP…NVXLIKFYGI (163 aa). H186, C221, E223, C225, H229, and M232 together coordinate Cu cation. A Mg(2+)-binding site is contributed by E223.

The protein belongs to the cytochrome c oxidase subunit 2 family. Component of the cytochrome c oxidase (complex IV, CIV), a multisubunit enzyme composed of a catalytic core of 3 subunits and several supernumerary subunits. The complex exists as a monomer or a dimer and forms supercomplexes (SCs) in the inner mitochondrial membrane with ubiquinol-cytochrome c oxidoreductase (cytochrome b-c1 complex, complex III, CIII). Cu cation serves as cofactor.

Its subcellular location is the mitochondrion inner membrane. The catalysed reaction is 4 Fe(II)-[cytochrome c] + O2 + 8 H(+)(in) = 4 Fe(III)-[cytochrome c] + 2 H2O + 4 H(+)(out). In terms of biological role, component of the cytochrome c oxidase, the last enzyme in the mitochondrial electron transport chain which drives oxidative phosphorylation. The respiratory chain contains 3 multisubunit complexes succinate dehydrogenase (complex II, CII), ubiquinol-cytochrome c oxidoreductase (cytochrome b-c1 complex, complex III, CIII) and cytochrome c oxidase (complex IV, CIV), that cooperate to transfer electrons derived from NADH and succinate to molecular oxygen, creating an electrochemical gradient over the inner membrane that drives transmembrane transport and the ATP synthase. Cytochrome c oxidase is the component of the respiratory chain that catalyzes the reduction of oxygen to water. Electrons originating from reduced cytochrome c in the intermembrane space (IMS) are transferred via the dinuclear copper A center (CU(A)) of subunit 2 and heme A of subunit 1 to the active site in subunit 1, a binuclear center (BNC) formed by heme A3 and copper B (CU(B)). The BNC reduces molecular oxygen to 2 water molecules using 4 electrons from cytochrome c in the IMS and 4 protons from the mitochondrial matrix. The protein is Cytochrome c oxidase subunit 2 (COX2) of Phytophthora megasperma (Potato pink rot fungus).